Reading from the N-terminus, the 338-residue chain is RNA 3'-terminal phosphate cyclase (338 aa).

ATP contacts are provided by residues Gln-103 and 283–287; that span reads YLADQ. His-308 functions as the Tele-AMP-histidine intermediate in the catalytic mechanism.

Belongs to the RNA 3'-terminal cyclase family. Type 1 subfamily.

The protein resides in the cytoplasm. The catalysed reaction is a 3'-end 3'-phospho-ribonucleotide-RNA + ATP = a 3'-end 2',3'-cyclophospho-ribonucleotide-RNA + AMP + diphosphate. Its function is as follows. Catalyzes the conversion of 3'-phosphate to a 2',3'-cyclic phosphodiester at the end of RNA. The mechanism of action of the enzyme occurs in 3 steps: (A) adenylation of the enzyme by ATP; (B) transfer of adenylate to an RNA-N3'P to produce RNA-N3'PP5'A; (C) and attack of the adjacent 2'-hydroxyl on the 3'-phosphorus in the diester linkage to produce the cyclic end product. The biological role of this enzyme is unknown but it is likely to function in some aspects of cellular RNA processing. This chain is RNA 3'-terminal phosphate cyclase, found in Escherichia coli O139:H28 (strain E24377A / ETEC).